We begin with the raw amino-acid sequence, 450 residues long: tRNA modification GTPase MnmE (450 aa).

The (6S)-5-formyl-5,6,7,8-tetrahydrofolate site is built by R20, E78, and K117. The TrmE-type G domain maps to 211-372; the sequence is GLRMVIVGKP…LEESIYRETQ (162 aa). N221 contributes to the K(+) binding site. GTP contacts are provided by residues 221 to 226, 240 to 246, 265 to 268, 326 to 329, and 353 to 355; these read NVGKST, TDIPGTT, DTAG, NKVD, and SAL. S225 serves as a coordination point for Mg(2+). K(+) is bound by residues T240, I242, and T245. T246 serves as a coordination point for Mg(2+). K450 contributes to the (6S)-5-formyl-5,6,7,8-tetrahydrofolate binding site.

Belongs to the TRAFAC class TrmE-Era-EngA-EngB-Septin-like GTPase superfamily. TrmE GTPase family. Homodimer. Heterotetramer of two MnmE and two MnmG subunits. Requires K(+) as cofactor.

It is found in the cytoplasm. Exhibits a very high intrinsic GTPase hydrolysis rate. Involved in the addition of a carboxymethylaminomethyl (cmnm) group at the wobble position (U34) of certain tRNAs, forming tRNA-cmnm(5)s(2)U34. The protein is tRNA modification GTPase MnmE of Thermotoga maritima (strain ATCC 43589 / DSM 3109 / JCM 10099 / NBRC 100826 / MSB8).